The sequence spans 275 residues: 2,3,4,5-tetrahydropyridine-2,6-dicarboxylate N-succinyltransferase (275 aa).

Substrate is bound by residues Arg108 and Asp145.

It belongs to the transferase hexapeptide repeat family. Homotrimer.

Its subcellular location is the cytoplasm. The catalysed reaction is (S)-2,3,4,5-tetrahydrodipicolinate + succinyl-CoA + H2O = (S)-2-succinylamino-6-oxoheptanedioate + CoA. The protein operates within amino-acid biosynthesis; L-lysine biosynthesis via DAP pathway; LL-2,6-diaminopimelate from (S)-tetrahydrodipicolinate (succinylase route): step 1/3. This is 2,3,4,5-tetrahydropyridine-2,6-dicarboxylate N-succinyltransferase from Ruegeria pomeroyi (strain ATCC 700808 / DSM 15171 / DSS-3) (Silicibacter pomeroyi).